Reading from the N-terminus, the 101-residue chain is Putative pterin-4-alpha-carbinolamine dehydratase (101 aa).

Belongs to the pterin-4-alpha-carbinolamine dehydratase family.

The catalysed reaction is (4aS,6R)-4a-hydroxy-L-erythro-5,6,7,8-tetrahydrobiopterin = (6R)-L-erythro-6,7-dihydrobiopterin + H2O. In Streptomyces coelicolor (strain ATCC BAA-471 / A3(2) / M145), this protein is Putative pterin-4-alpha-carbinolamine dehydratase.